The sequence spans 439 residues: Xylose isomerase (439 aa).

Active-site residues include H101 and D104. Mg(2+) contacts are provided by E232, E268, H271, D296, D307, D309, and D339.

The protein belongs to the xylose isomerase family. In terms of assembly, homotetramer. The cofactor is Mg(2+).

It localises to the cytoplasm. It carries out the reaction alpha-D-xylose = alpha-D-xylulofuranose. The protein is Xylose isomerase of Haemophilus influenzae (strain 86-028NP).